Here is a 132-residue protein sequence, read N- to C-terminus: Mini-ribonuclease 3 (132 aa).

Asp17 is a catalytic residue.

This sequence belongs to the MrnC RNase family. In terms of assembly, homodimer. Requires Mg(2+) as cofactor.

The protein resides in the cytoplasm. Functionally, involved in correct processing of both the 5' and 3' ends of 23S rRNA precursor. Processes 30S rRNA precursor transcript even in absence of ribonuclease 3 (Rnc); Rnc processes 30S rRNA into smaller rRNA precursors. This chain is Mini-ribonuclease 3, found in Enterococcus faecalis (strain ATCC 700802 / V583).